The following is a 212-amino-acid chain: Thiamine-phosphate synthase (212 aa).

Residues 43 to 47 and asparagine 75 contribute to the 4-amino-2-methyl-5-(diphosphooxymethyl)pyrimidine site; that span reads QYRNK. The Mg(2+) site is built by aspartate 76 and aspartate 95. Serine 114 is a 4-amino-2-methyl-5-(diphosphooxymethyl)pyrimidine binding site. 141-143 is a 2-[(2R,5Z)-2-carboxy-4-methylthiazol-5(2H)-ylidene]ethyl phosphate binding site; the sequence is SMT. Lysine 144 contributes to the 4-amino-2-methyl-5-(diphosphooxymethyl)pyrimidine binding site. Glycine 171 is a binding site for 2-[(2R,5Z)-2-carboxy-4-methylthiazol-5(2H)-ylidene]ethyl phosphate.

It belongs to the thiamine-phosphate synthase family. The cofactor is Mg(2+).

It carries out the reaction 2-[(2R,5Z)-2-carboxy-4-methylthiazol-5(2H)-ylidene]ethyl phosphate + 4-amino-2-methyl-5-(diphosphooxymethyl)pyrimidine + 2 H(+) = thiamine phosphate + CO2 + diphosphate. It catalyses the reaction 2-(2-carboxy-4-methylthiazol-5-yl)ethyl phosphate + 4-amino-2-methyl-5-(diphosphooxymethyl)pyrimidine + 2 H(+) = thiamine phosphate + CO2 + diphosphate. The enzyme catalyses 4-methyl-5-(2-phosphooxyethyl)-thiazole + 4-amino-2-methyl-5-(diphosphooxymethyl)pyrimidine + H(+) = thiamine phosphate + diphosphate. Its pathway is cofactor biosynthesis; thiamine diphosphate biosynthesis; thiamine phosphate from 4-amino-2-methyl-5-diphosphomethylpyrimidine and 4-methyl-5-(2-phosphoethyl)-thiazole: step 1/1. Condenses 4-methyl-5-(beta-hydroxyethyl)thiazole monophosphate (THZ-P) and 2-methyl-4-amino-5-hydroxymethyl pyrimidine pyrophosphate (HMP-PP) to form thiamine monophosphate (TMP). The sequence is that of Thiamine-phosphate synthase from Nitrosomonas eutropha (strain DSM 101675 / C91 / Nm57).